The following is a 293-amino-acid chain: tRNA-cytidine(32) 2-sulfurtransferase (293 aa).

The short motif at 62–67 is the PP-loop motif element; sequence SGGKDS. The [4Fe-4S] cluster site is built by Cys137, Cys140, and Cys228.

This sequence belongs to the TtcA family. As to quaternary structure, homodimer. Requires Mg(2+) as cofactor. The cofactor is [4Fe-4S] cluster.

Its subcellular location is the cytoplasm. The catalysed reaction is cytidine(32) in tRNA + S-sulfanyl-L-cysteinyl-[cysteine desulfurase] + AH2 + ATP = 2-thiocytidine(32) in tRNA + L-cysteinyl-[cysteine desulfurase] + A + AMP + diphosphate + H(+). It participates in tRNA modification. Catalyzes the ATP-dependent 2-thiolation of cytidine in position 32 of tRNA, to form 2-thiocytidine (s(2)C32). The sulfur atoms are provided by the cysteine/cysteine desulfurase (IscS) system. This Brucella melitensis biotype 1 (strain ATCC 23456 / CCUG 17765 / NCTC 10094 / 16M) protein is tRNA-cytidine(32) 2-sulfurtransferase.